The chain runs to 160 residues: MMERFEKIEMKIPAKAEYVAIIRLTMAGVANRTGFAYDDIEDMKIAISEACTNIVQHAYKEDVGEIAIVFGLYEDRLEIMVADNGVSFDFNNLRSKVGPYDISKPVEHLPENGLGLYLINTLMDDIQIMHDEGMTVLMTKYIQREQVENDGNPISTYNSY.

Belongs to the anti-sigma-factor family.

It carries out the reaction L-seryl-[protein] + ATP = O-phospho-L-seryl-[protein] + ADP + H(+). The enzyme catalyses L-threonyl-[protein] + ATP = O-phospho-L-threonyl-[protein] + ADP + H(+). Its function is as follows. Negative regulator of sigma-B activity. Phosphorylates and inactivates its specific antagonist protein, RsbV. Upon phosphorylation of RsbV, RsbW is released and binds to sigma-B, thereby blocking its ability to form an RNA polymerase holoenzyme (E-sigma-B). This is Serine-protein kinase RsbW from Bacillus cereus (strain AH187).